The sequence spans 139 residues: FAD synthase (139 aa).

Residues 9–10 (TF), 14–17 (HPGH), and Asp-92 contribute to the ATP site.

It belongs to the archaeal FAD synthase family. In terms of assembly, homodimer. It depends on a divalent metal cation as a cofactor.

The enzyme catalyses FMN + ATP + H(+) = FAD + diphosphate. Its pathway is cofactor biosynthesis; FAD biosynthesis; FAD from FMN: step 1/1. Catalyzes the transfer of the AMP portion of ATP to flavin mononucleotide (FMN) to produce flavin adenine dinucleotide (FAD) coenzyme. This chain is FAD synthase, found in Methanosarcina barkeri (strain Fusaro / DSM 804).